Reading from the N-terminus, the 252-residue chain is Small ribosomal subunit protein eS1B (252 aa).

N-acetylalanine; partial is present on alanine 2. A Phosphoserine modification is found at serine 251.

Belongs to the eukaryotic ribosomal protein eS1 family. Component of the small ribosomal subunit (SSU). Mature yeast ribosomes consist of a small (40S) and a large (60S) subunit. The 40S small subunit contains 1 molecule of ribosomal RNA (18S rRNA) and at least 33 different proteins. The large 60S subunit contains 3 rRNA molecules (25S, 5.8S and 5S rRNA) and at least 46 different proteins. eS1 interacts directly with uS11 and eS26, which form part of the mRNA exit tunnel.

It is found in the cytoplasm. Its function is as follows. Component of the ribosome, a large ribonucleoprotein complex responsible for the synthesis of proteins in the cell. The small ribosomal subunit (SSU) binds messenger RNAs (mRNAs) and translates the encoded message by selecting cognate aminoacyl-transfer RNA (tRNA) molecules. The large subunit (LSU) contains the ribosomal catalytic site termed the peptidyl transferase center (PTC), which catalyzes the formation of peptide bonds, thereby polymerizing the amino acids delivered by tRNAs into a polypeptide chain. The nascent polypeptides leave the ribosome through a tunnel in the LSU and interact with protein factors that function in enzymatic processing, targeting, and the membrane insertion of nascent chains at the exit of the ribosomal tunnel. This chain is Small ribosomal subunit protein eS1B (rps102), found in Schizosaccharomyces pombe (strain 972 / ATCC 24843) (Fission yeast).